The primary structure comprises 582 residues: Arginine--tRNA ligase (582 aa).

The 'HIGH' region signature appears at Ala-136–His-146.

Belongs to the class-I aminoacyl-tRNA synthetase family. In terms of assembly, monomer.

It localises to the cytoplasm. The catalysed reaction is tRNA(Arg) + L-arginine + ATP = L-arginyl-tRNA(Arg) + AMP + diphosphate. The chain is Arginine--tRNA ligase from Novosphingobium aromaticivorans (strain ATCC 700278 / DSM 12444 / CCUG 56034 / CIP 105152 / NBRC 16084 / F199).